A 383-amino-acid chain; its full sequence is Mannan endo-1,4-beta-mannosidase (383 aa).

An N-terminal signal peptide occupies residues 1-35; sequence MRNARSTLITTAGMAFAVLGLLFALAGPSAGRAEA. The 39-residue stretch at 339–377 folds into the CBM10 domain; that stretch reads GGSTGGTAPNGYPYCVNGGASDPDGDGWGWENSRSCVVR.

It belongs to the glycosyl hydrolase 5 (cellulase A) family. In terms of assembly, monomer.

The catalysed reaction is Random hydrolysis of (1-&gt;4)-beta-D-mannosidic linkages in mannans, galactomannans and glucomannans.. This chain is Mannan endo-1,4-beta-mannosidase (manA), found in Streptomyces lividans.